Reading from the N-terminus, the 628-residue chain is DNA mismatch repair protein MutL (628 aa).

Residues 332–416 (PTSAMPAPGN…ASTAPPLSEE (85 aa)) are disordered. The segment covering 375 to 396 (EGSSRSDVPYPSASQVTETTDS) has biased composition (polar residues).

This sequence belongs to the DNA mismatch repair MutL/HexB family.

Its function is as follows. This protein is involved in the repair of mismatches in DNA. It is required for dam-dependent methyl-directed DNA mismatch repair. May act as a 'molecular matchmaker', a protein that promotes the formation of a stable complex between two or more DNA-binding proteins in an ATP-dependent manner without itself being part of a final effector complex. The sequence is that of DNA mismatch repair protein MutL from Syntrophotalea carbinolica (strain DSM 2380 / NBRC 103641 / GraBd1) (Pelobacter carbinolicus).